The primary structure comprises 1021 residues: Collagenase ColH (1021 aa).

Positions 1–30 (MKRKCLSKRLMLAITMATIFTVNSTLPIYA) are cleaved as a signal peptide. Residues 31-40 (AVDKNNATAA) constitute a propeptide that is removed on maturation. The segment at 41 to 320 (VQNESKRYTV…SADQIKRHYD (280 aa)) is activator domain. An S1 metalloprotease domain region spans residues 41–717 (VQNESKRYTV…TYDVVFHGYL (677 aa)). A catalytic subdomain region spans residues 330 to 601 (PLDKFKKEGK…MQERIDNYEN (272 aa)). Asp-421 contributes to the Zn(2+) binding site. Residue Glu-430 participates in Ca(2+) binding. Position 455 (His-455) interacts with Zn(2+). Glu-456 is a catalytic residue. A Zn(2+)-binding site is contributed by His-459. Residues Gly-463, Val-467, and Gly-469 each contribute to the Ca(2+) site. Glu-487 contributes to the Zn(2+) binding site. A helper subdomain region spans residues 609–721 (DDYLVRHAYK…VFHGYLPNEG (113 aa)). Residues 718–810 (PNEGDSKNSL…VSTTTAEIKD (93 aa)) are S2a domain. The Ca(2+) site is built by Asn-725, Ser-726, Asp-753, Asp-755, Asp-794, Asn-814, Lys-815, Asp-842, Asp-844, Asp-884, Glu-908, Glu-910, Asn-912, Asn-913, Thr-931, Asp-937, Gln-938, and Asp-939. Residues 727–808 (LPYGKINGTY…SSVSTTTAEI (82 aa)) form the PKD 1 domain. Residues 811-904 (LSENKLPVIY…KIKITDPVYP (94 aa)) form an S2b domain region. The 90-residue stretch at 816–905 (LPVIYMHVPK…IKITDPVYPI (90 aa)) folds into the PKD 2 domain. The segment at 903 to 922 (YPIGTEKEPNNSKETASGPI) is disordered. Residues 905–1021 (IGTEKEPNNS…RINIEGSVGR (117 aa)) form an S3 collagen-binding domain region. The collagen-binding stretch occupies residues 1002–1004 (YMF).

It belongs to the peptidase M9B family. Collagenase subfamily. Ca(2+) serves as cofactor. Requires Zn(2+) as cofactor. Upon purification gives rise to 98 kDa, 105 kDa and 116 kDa (full-length) proteins, all of which have the same N-terminus.

Its subcellular location is the secreted. It carries out the reaction Digestion of native collagen in the triple helical region at Xaa-|-Gly bonds. With synthetic peptides, a preference is shown for Gly at P3 and P1', Pro and Ala at P2 and P2', and hydroxyproline, Ala or Arg at P3'.. With respect to regulation, inhibited by EDTA. Inhibited by 1-10-phenanthroline. Inhibited by broad-spectrum zinc metalloprotease inhibitor batimastat. N-aryl mercaptoacetamide-based inhibitors have been isolated that act on clostridial collagenases with submicromolar affinity while having negligibile activity on human collagenases. Functionally, clostridial collagenases are among the most efficient degraders of eukaryotic collagen known; saprophytes use collagen as a carbon source while pathogens additionally digest collagen to aid in host colonization. Has both tripeptidylcarboxypeptidase on Gly-X-Y and endopeptidase activities; the endopeptidase cuts within the triple helix region of collagen while tripeptidylcarboxypeptidase successively digests the exposed ends, thus clostridial collagenases can digest large sections of collagen. The full-length protein has collagenase activity, while both the 116 kDa and 98 kDa forms act on gelatin. In vitro digestion of soluble calf skin collagen fibrils requires both ColG and ColH; ColG forms missing the second collagen-binding domain is also synergistic with ColH, although their overall efficiency is decreased. Digestion of collagen requires Ca(2+) and is inhibited by EDTA. The activator domain (residues 119-388) and catalytic subdomain (330-601) open and close around substrate allowing digestion when the protein is closed. This Hathewaya histolytica (Clostridium histolyticum) protein is Collagenase ColH.